The primary structure comprises 99 residues: UPF0125 protein BU253 (99 aa).

This sequence belongs to the UPF0125 (RnfH) family.

This Buchnera aphidicola subsp. Acyrthosiphon pisum (strain APS) (Acyrthosiphon pisum symbiotic bacterium) protein is UPF0125 protein BU253.